A 242-amino-acid chain; its full sequence is Probable septum site-determining protein MinC (242 aa).

This sequence belongs to the MinC family. As to quaternary structure, interacts with MinD and FtsZ.

Cell division inhibitor that blocks the formation of polar Z ring septums. Rapidly oscillates between the poles of the cell to destabilize FtsZ filaments that have formed before they mature into polar Z rings. Prevents FtsZ polymerization. This is Probable septum site-determining protein MinC from Brucella anthropi (strain ATCC 49188 / DSM 6882 / CCUG 24695 / JCM 21032 / LMG 3331 / NBRC 15819 / NCTC 12168 / Alc 37) (Ochrobactrum anthropi).